We begin with the raw amino-acid sequence, 453 residues long: Obtusifoliol 14-alpha demethylase (453 aa).

Residue Cys-395 participates in heme binding.

Belongs to the cytochrome P450 family. Requires heme as cofactor.

It is found in the membrane. It catalyses the reaction a 14alpha-methyl steroid + 3 reduced [NADPH--hemoprotein reductase] + 3 O2 = a Delta(14) steroid + formate + 3 oxidized [NADPH--hemoprotein reductase] + 4 H2O + 4 H(+). The protein operates within steroid biosynthesis; zymosterol biosynthesis; zymosterol from lanosterol: step 1/6. Catalyzes the 14-alpha demethylation of obtusifoliol to 4 alpha-methyl-5 alpha-ergosta-8,14,24(28)-trien-3 beta-ol. The polypeptide is Obtusifoliol 14-alpha demethylase (CYP51) (Triticum aestivum (Wheat)).